A 76-amino-acid chain; its full sequence is uncharacterized protein (76 aa).

3 consecutive transmembrane segments (helical) span residues 2 to 22 (LKVA…YSLF), 28 to 48 (LLIV…VEAI), and 56 to 76 (EYLL…KFII).

The protein resides in the cell membrane. This is an uncharacterized protein from Bacillus subtilis (strain 168).